A 409-amino-acid polypeptide reads, in one-letter code: Elongation factor Tu (409 aa).

A tr-type G domain is found at Lys-10–Glu-214. Positions Gly-19 to Thr-26 are G1. Gly-19 to Thr-26 is a binding site for GTP. Thr-26 contacts Mg(2+). Positions Gly-60–Asn-64 are G2. A G3 region spans residues Asp-81–Gly-84. Residues Asp-81 to His-85 and Asn-136 to Asp-139 contribute to the GTP site. Positions Asn-136–Asp-139 are G4. A G5 region spans residues Ser-174–Leu-176.

The protein belongs to the TRAFAC class translation factor GTPase superfamily. Classic translation factor GTPase family. EF-Tu/EF-1A subfamily. Monomer.

It localises to the cytoplasm. The enzyme catalyses GTP + H2O = GDP + phosphate + H(+). In terms of biological role, GTP hydrolase that promotes the GTP-dependent binding of aminoacyl-tRNA to the A-site of ribosomes during protein biosynthesis. The chain is Elongation factor Tu from Rippkaea orientalis (strain PCC 8801 / RF-1) (Cyanothece sp. (strain PCC 8801)).